A 58-amino-acid chain; its full sequence is MGVPKRRVSKARKNKRRSQWKIAAPKLVSCPHCHQLMIPHRVCKNCGYYDGRQVVNME.

It belongs to the bacterial ribosomal protein bL32 family.

The sequence is that of Large ribosomal subunit protein bL32 from Carboxydothermus hydrogenoformans (strain ATCC BAA-161 / DSM 6008 / Z-2901).